The chain runs to 308 residues: Ribosomal RNA small subunit methyltransferase H (308 aa).

Residues 35–37 (GGH), D54, F80, D101, and Q108 each bind S-adenosyl-L-methionine.

This sequence belongs to the methyltransferase superfamily. RsmH family.

It localises to the cytoplasm. It carries out the reaction cytidine(1402) in 16S rRNA + S-adenosyl-L-methionine = N(4)-methylcytidine(1402) in 16S rRNA + S-adenosyl-L-homocysteine + H(+). Its function is as follows. Specifically methylates the N4 position of cytidine in position 1402 (C1402) of 16S rRNA. This is Ribosomal RNA small subunit methyltransferase H from Mycoplasma pneumoniae (strain ATCC 29342 / M129 / Subtype 1) (Mycoplasmoides pneumoniae).